We begin with the raw amino-acid sequence, 113 residues long: Large ribosomal subunit protein bL20c (113 aa).

The protein belongs to the bacterial ribosomal protein bL20 family.

The protein localises to the plastid. The protein resides in the chloroplast. In terms of biological role, binds directly to 23S ribosomal RNA and is necessary for the in vitro assembly process of the 50S ribosomal subunit. It is not involved in the protein synthesizing functions of that subunit. The chain is Large ribosomal subunit protein bL20c from Nephroselmis olivacea (Green alga).